Reading from the N-terminus, the 320-residue chain is Fructose-1,6-bisphosphatase class 1 (320 aa).

Positions 93, 114, 116, and 117 each coordinate Mg(2+). Substrate is bound by residues 117–120, tyrosine 225, and lysine 256; that span reads DGSS. A Mg(2+)-binding site is contributed by glutamate 262.

This sequence belongs to the FBPase class 1 family. In terms of assembly, homotetramer. Requires Mg(2+) as cofactor.

It is found in the cytoplasm. It catalyses the reaction beta-D-fructose 1,6-bisphosphate + H2O = beta-D-fructose 6-phosphate + phosphate. The protein operates within carbohydrate biosynthesis; gluconeogenesis. This chain is Fructose-1,6-bisphosphatase class 1, found in Syntrophotalea carbinolica (strain DSM 2380 / NBRC 103641 / GraBd1) (Pelobacter carbinolicus).